A 335-amino-acid polypeptide reads, in one-letter code: Probable deoxyhypusine synthase (335 aa).

Lys308 acts as the Nucleophile in catalysis.

This sequence belongs to the deoxyhypusine synthase family. NAD(+) serves as cofactor.

The enzyme catalyses [eIF5A protein]-L-lysine + spermidine = [eIF5A protein]-deoxyhypusine + propane-1,3-diamine. It functions in the pathway protein modification; eIF5A hypusination. In terms of biological role, catalyzes the NAD-dependent oxidative cleavage of spermidine and the subsequent transfer of the butylamine moiety of spermidine to the epsilon-amino group of a specific lysine residue of the eIF-5A precursor protein to form the intermediate deoxyhypusine residue. This is Probable deoxyhypusine synthase from Thermococcus onnurineus (strain NA1).